Reading from the N-terminus, the 453-residue chain is G-protein coupled receptor 39 (453 aa).

Topologically, residues 1 to 34 are extracellular; sequence MASPSLPGSDCSQIIDHSHVPEFEVATWIKITLI. 2 disulfide bridges follow: Cys-11–Cys-191 and Cys-108–Cys-210. Positions 17 and 19 each coordinate Zn(2+). The helical transmembrane segment at 35-55 threads the bilayer; that stretch reads LVYLIIFVMGLLGNSATIRVT. Residues 56-69 are Cytoplasmic-facing; sequence QVLQKKGYLQKEVT. Residues 70–89 form a helical membrane-spanning segment; sequence DHMVSLACSDILVFLIGMPM. The Extracellular segment spans residues 90–109; that stretch reads EFYSIIWNPLTTSSYTLSCK. Residues 110–131 form a helical membrane-spanning segment; the sequence is LHTFLFEACSYATLLHVLTLSF. Residues 132 to 151 are Cytoplasmic-facing; sequence ERYIAICHPFRYKAVSGPCQ. A helical membrane pass occupies residues 152–172; the sequence is VKLLIGFVWVTSALVALPLLF. The Extracellular portion of the chain corresponds to 173-217; that stretch reads AMGTEYPLVNVPSHRGLTCNRSSTRHHEQPETSNMSICTNLSSRW. 3 N-linked (GlcNAc...) asparagine glycosylation sites follow: Asn-192, Asn-206, and Asn-212. Residues 218 to 242 form a helical membrane-spanning segment; sequence TVFQSSIFGAFVVYLVVLLSVAFMC. Residues 243–283 lie on the Cytoplasmic side of the membrane; sequence WNMMQVLMKSQKGSLAGGTRPPQLRKSESEESRTARRQTII. Residues 255 to 274 are disordered; sequence GSLAGGTRPPQLRKSESEES. A helical membrane pass occupies residues 284–305; that stretch reads FLRLIVVTLAVCWMPNQIRRIM. The Extracellular segment spans residues 306–323; sequence AAAKPKHDWTRSYFRAYM. A helical membrane pass occupies residues 324–344; it reads ILLPFSETFFYLSSVINPLLY. At 345 to 453 the chain is on the cytoplasmic side; that stretch reads TVSSQQFRRV…AENGFQEHEV (109 aa). A Phosphoserine modification is found at Ser-396. The segment at 415 to 453 is disordered; that stretch reads SEAEPQSKSQSLSLESLEPNSGAKPANSAAENGFQEHEV. The span at 418 to 435 shows a compositional bias: low complexity; that stretch reads EPQSKSQSLSLESLEPNS.

The protein belongs to the G-protein coupled receptor 1 family. Interacts with HTR1A. Interacts with GALR1. As to expression, expressed in many tissues, including the stomach, intestine and hypothalamus.

The protein localises to the cell membrane. Its function is as follows. Zinc-sensing receptor that can sense changes in extracellular Zn(2+), mediate Zn(2+) signal transmission, and participates in the regulation of numerous physiological processes including glucose homeostasis regulation, gastrointestinal mobility, hormone secretion and cell death. Activation by Zn(2+) in keratinocytes increases the intracellular concentration of Ca(2+) and activates the ERK/MAPK and PI3K/AKT signaling pathways leading to epithelial repair. Plays an essential role in normal wound healing by inducing the production of cytokines including the major inflammatory cytokine IL6 via the PKC/MAPK/CEBPB pathway. Regulates adipose tissue metabolism, especially lipolysis, and regulates the function of lipases, such as hormone-sensitive lipase and adipose triglyceride lipase. Plays a role in the inhibition of cell death and protects against oxidative, endoplasmic reticulum and mitochondrial stress by inducing secretion of the cytoprotective pigment epithelium-derived growth factor (PEDF) and probably other protective transcripts in a GNA13/RHOA/SRE-dependent manner. Forms dynamic heteroreceptor complexes with HTR1A and GALR1 depending on cell type or specific physiological states, resulting in signaling diversity: HTR1A-GPR39 shows additive increase in signaling along the serum response element (SRE) and NF-kappa-B pathways while GALR1 acts as an antagonist blocking SRE. This chain is G-protein coupled receptor 39 (GPR39), found in Homo sapiens (Human).